The primary structure comprises 201 residues: MNNQIFSPKITAVIESLRKLPTIGKKSSQRLALYLLDKSPETAITIANSLLDAAENIKKCKYCQSLTEKDVCDICGSQNRDESKLCIIESMLDLVAIEEAGFFKGKYFVLNGRISPLDGIGPNELKLDILEQIIINREINEIILAISPTVEGETTAHFISQMIGKDIKISRIGFGVPFGGELEYLDQQTLIHAFNARTNIK.

The C4-type zinc-finger motif lies at 60–75 (CKYCQSLTEKDVCDIC). In terms of domain architecture, Toprim spans 83–177 (SKLCIIESML…KISRIGFGVP (95 aa)).

The protein belongs to the RecR family.

Its function is as follows. May play a role in DNA repair. It seems to be involved in an RecBC-independent recombinational process of DNA repair. It may act with RecF and RecO. The polypeptide is Recombination protein RecR (Francisella philomiragia subsp. philomiragia (strain ATCC 25017 / CCUG 19701 / FSC 153 / O#319-036)).